The sequence spans 76 residues: Conotoxin Bu28 (76 aa).

The N-terminal stretch at 1–24 (MTSVQSATCCCLLWLVLCVQLVTP) is a signal peptide. The propeptide occupies 25 to 39 (DSPATAQLSRHLTAR). Intrachain disulfides connect Cys50–Cys63 and Cys54–Cys65. The residue at position 69 (Arg69) is an Arginine amide. Residues 71-76 (VVSSSI) constitute a propeptide that is removed on maturation.

Belongs to the conotoxin J superfamily. As to expression, expressed by the venom duct.

The protein localises to the secreted. Functionally, highly inhibits both nicotinic acetylcholine receptors (neuronal (alpha-3/beta-4) and muscular (alpha-1/beta-1/epsilon/delta) subtypes) and the voltage-gated potassium channel Kv1.6/KCNA6 subtype. The protein is Conotoxin Bu28 of Conus bullatus (Bubble cone).